A 446-amino-acid polypeptide reads, in one-letter code: Citrate/sodium symporter (446 aa).

Helical transmembrane passes span 23–43 (IFGMPLPLYAFALITLLLSHF), 46–66 (AIPTDLVGGFALMFVMGAIFG), 79–99 (IGGAPVMIFLVAAYFVYAGIF), 110–130 (VMDKSNFLNLFIAVLITGAIL), and 148–168 (ILAGIVGASLFGIVIGLCFGI). The Na(+) site is built by isoleucine 181 and glycine 183. Positions 186 and 187 each coordinate citrate. A run of 5 helical transmembrane segments spans residues 213–233 (IAILTIANIFAIIFAALLDMI), 267–287 (ETAVGMVLSTTCFLLAYVVAK), 289–309 (ILPSIGGVSIHYFAWMVLIVA), 335–355 (QLLWVLMVGVGVCYTDLQEII), and 364–384 (VIAAIIVVGAVVGAAIGGWLI). Positions 399 and 401 each coordinate Na(+). The citrate site is built by arginine 402, glycine 404, serine 405, and arginine 428. A helical transmembrane segment spans residues 425–445 (ISSRLGGGIVLVIASIVFSMM).

The protein belongs to the 2-hydroxycarboxylate transporter (2-HCT) (TC 2.A.24) family. In terms of assembly, homodimer.

It localises to the cell inner membrane. The enzyme catalyses citrate(out) + 2 Na(+)(out) = citrate(in) + 2 Na(+)(in). Its function is as follows. Secondary active transporter that catalyzes the uptake of citrate across the membrane with the concomitant uptake of sodium. Is specific for citrate. In Salmonella pullorum, this protein is Citrate/sodium symporter.